The following is a 326-amino-acid chain: tRNA(Ile)-lysidine synthase (326 aa).

33 to 38 (SGGPDS) provides a ligand contact to ATP.

The protein belongs to the tRNA(Ile)-lysidine synthase family.

Its subcellular location is the cytoplasm. It carries out the reaction cytidine(34) in tRNA(Ile2) + L-lysine + ATP = lysidine(34) in tRNA(Ile2) + AMP + diphosphate + H(+). In terms of biological role, ligates lysine onto the cytidine present at position 34 of the AUA codon-specific tRNA(Ile) that contains the anticodon CAU, in an ATP-dependent manner. Cytidine is converted to lysidine, thus changing the amino acid specificity of the tRNA from methionine to isoleucine. In Novosphingobium aromaticivorans (strain ATCC 700278 / DSM 12444 / CCUG 56034 / CIP 105152 / NBRC 16084 / F199), this protein is tRNA(Ile)-lysidine synthase.